The sequence spans 684 residues: G-protein-signaling modulator 2 (684 aa).

The interval 22-357 (ASCLELALEG…HLEISREVGD (336 aa)) is important for interaction with NUMA1; INSC and FRMPD1. 8 TPR repeats span residues 24 to 57 (CLEL…GTED), 62 to 95 (SAIY…ARTI), 102 to 135 (AKAS…SREL), 142 to 184 (ARAL…AVDF), 202 to 235 (GRAF…AKEF), 242 to 275 (RRAY…ARQL), 282 to 315 (AQSC…AQEL), and 322 to 355 (GRAC…SREV). Position 132 is a phosphoserine; by PKG (serine 132). Position 352 is a phosphoserine; by PKG (serine 352). Phosphoserine occurs at positions 408 and 483. Threonine 486 bears the Phosphothreonine mark. Positions 489–511 (DEGFFDLLSRFQSNRMDDQRCCL) constitute a GoLoco 1 domain. A Phosphoserine; by PKC modification is found at serine 501. Residues serine 541 and serine 565 each carry the phosphoserine modification. GoLoco domains lie at 544-566 (TDEF…RASF), 594-616 (DEDF…RCAP), and 628-650 (DEDF…RVLL). Serine 607 is modified (phosphoserine; by PKG). Residues arginine 608, arginine 613, arginine 642, and arginine 647 each coordinate GDP.

This sequence belongs to the GPSM family. In terms of assembly, interacts with the dynein-dynactin complex; this interaction is inhibited in a PLK1-dependent manner. Part of a spindle orientation complex at least composed of GNAI1, GPSM2 and NUMA1. Interacts with LLGL2. Interacts (via TPR repeat region) with INSC/inscuteable. Interacts (via TPR repeat region) with NUMA1 (via C-terminus); this interaction is direct, inhibited in a PLK1-dependent manner, prevents the binding of NUMA1 with SPAG5 and promotes spindle pole organization. INSC and NUMA1 compete for the same binding site, but INSC has higher affinity and can displace NUMA1 (in vitro). Interacts with GNAI2. Interacts (via GoLoco domains) with the GDP-bound form of GNAI1 and GNAI3; has much lower affinity for the GTP-bound form. Interaction with GDP-bound GNAI3 strongly enhances the affinity for NUMA1. Interacts (via TPR repeat region) with FRMPD1. INSC and FRMPD1 compete for the same binding site, but INSC has higher affinity and can displace FRMPD1 (in vitro). Interacts (via TPR repeat region) with FRMPD4. Identified in a complex with INSC and F2RL2/Par3. Interacts with TASOR. As to expression, ubiquitously expressed.

It is found in the cytoplasm. It localises to the cell cortex. Its subcellular location is the cytoskeleton. The protein resides in the spindle pole. The protein localises to the lateral cell membrane. Plays an important role in mitotic spindle pole organization via its interaction with NUMA1. Required for cortical dynein-dynactin complex recruitment during metaphase. Plays a role in metaphase spindle orientation. Also plays an important role in asymmetric cell divisions. Has guanine nucleotide dissociation inhibitor (GDI) activity towards G(i) alpha proteins, such as GNAI1 and GNAI3, and thereby regulates their activity. The chain is G-protein-signaling modulator 2 (GPSM2) from Homo sapiens (Human).